A 134-amino-acid polypeptide reads, in one-letter code: Small ribosomal subunit protein uS8 (134 aa).

This sequence belongs to the universal ribosomal protein uS8 family. Part of the 30S ribosomal subunit. Contacts proteins S5 and S12.

One of the primary rRNA binding proteins, it binds directly to 16S rRNA central domain where it helps coordinate assembly of the platform of the 30S subunit. In Thermotoga sp. (strain RQ2), this protein is Small ribosomal subunit protein uS8.